A 154-amino-acid polypeptide reads, in one-letter code: Prefoldin subunit alpha (154 aa).

This sequence belongs to the prefoldin alpha subunit family. As to quaternary structure, heterohexamer of two alpha and four beta subunits.

Its subcellular location is the cytoplasm. Molecular chaperone capable of stabilizing a range of proteins. Seems to fulfill an ATP-independent, HSP70-like function in archaeal de novo protein folding. This is Prefoldin subunit alpha from Hyperthermus butylicus (strain DSM 5456 / JCM 9403 / PLM1-5).